We begin with the raw amino-acid sequence, 523 residues long: Occludin (523 aa).

The tract at residues 1–20 (MSVRPFESPPPYRPDEFKPN) is disordered. The Cytoplasmic portion of the chain corresponds to 1-66 (MSVRPFESPP…KWTSPPGVIR (66 aa)). Residues 60–269 (SPPGVIRILS…IIVFAVKTRR (210 aa)) enclose the MARVEL domain. A helical membrane pass occupies residues 67 to 87 (ILSMLVIVMCIAVFACVASTL). The Extracellular segment spans residues 88–140 (AWDRAYGTGIFGGSMNYPYGSGFGSYGGGFGGYGYGYGYGYGGYTDPRAAKGF). The chain crosses the membrane as a helical span at residues 141–161 (LLAMAAFCFIASLVIFVTSVI). Residues 162–173 (RSGMSRTRRYYL) are Cytoplasmic-facing. Residues 174–194 (IVIIVSAILGIMVFIATIVYI) traverse the membrane as a helical segment. The Extracellular segment spans residues 195–244 (MGVNPTAQASGSMYGSQIYTICSQFYTPGGTGLYVDQYLYHYCVVDPQEA). Cysteines 216 and 237 form a disulfide. Residues 245–265 (IAIVLGFMIIVAFALIIVFAV) form a helical membrane-spanning segment. Residues 266–523 (KTRRKMDRYD…MVGDYDRRKT (258 aa)) lie on the Cytoplasmic side of the membrane. S302 carries the phosphoserine modification. A disordered region spans residues 302 to 338 (SAGTQDMPPPPSDYAERVDSPMAYSSNGKVNGKRSYP). T305 is subject to Phosphothreonine. 4 positions are modified to phosphoserine: S313, S321, S340, and S360. The interval 363 to 408 (DFRQPRYSSNDNLETPSKRTPTKGKAGKAKRTDPDHYETDYTTGGE) is disordered. A compositionally biased stretch (polar residues) spans 368–381 (RYSSNDNLETPSKR). Y369 bears the Phosphotyrosine mark. Phosphoserine occurs at positions 370 and 371. Over residues 382–391 (TPTKGKAGKA) the composition is skewed to basic residues. Positions 392-401 (KRTDPDHYET) are enriched in basic and acidic residues. Phosphotyrosine occurs at positions 399 and 403. Phosphothreonine; by PKC/PRKCH is present on residues T404 and T405. Residue S409 is modified to Phosphoserine. Positions 415–523 (EDWLREYPPI…MVGDYDRRKT (109 aa)) constitute an OCEL domain. The stretch at 433–489 (YKRNFDAGLQEYKSLLAELDEVNKELSRLDRELDDYREESEEYMAAADEYNRLKQVK) forms a coiled coil. S491 carries the phosphoserine modification.

Belongs to the ELL/occludin family. Interacts with TJP1/ZO1. Interacts with VAPA. Interacts with CLDN1, CLDN6, CLDN9, CLDN11, CLDN12 and CLDN17. Interacts with PLSCR1. Interacts with LSR, ILDR1 and ILDR2. Interacts with TJP2/ZO2. Dephosphorylated by PTPRJ.

It localises to the cell membrane. The protein resides in the cell junction. Its subcellular location is the tight junction. In terms of biological role, may play a role in the formation and regulation of the tight junction (TJ) paracellular permeability barrier. May be involved in the organization of actin in endothelial cells. This Rattus norvegicus (Rat) protein is Occludin (Ocln).